The following is a 410-amino-acid chain: Argininosuccinate synthase (410 aa).

Residues 10–18 (AYSGGLDTS) and Ala37 contribute to the ATP site. The L-citrulline site is built by Tyr90 and Ser95. Gly120 serves as a coordination point for ATP. Residues Thr122, Asn126, and Asp127 each contribute to the L-aspartate site. Asn126 serves as a coordination point for L-citrulline. Arg130, Ser182, Ser191, Glu267, and Tyr279 together coordinate L-citrulline.

It belongs to the argininosuccinate synthase family. Type 1 subfamily. As to quaternary structure, homotetramer.

Its subcellular location is the cytoplasm. It carries out the reaction L-citrulline + L-aspartate + ATP = 2-(N(omega)-L-arginino)succinate + AMP + diphosphate + H(+). It participates in amino-acid biosynthesis; L-arginine biosynthesis; L-arginine from L-ornithine and carbamoyl phosphate: step 2/3. The protein is Argininosuccinate synthase of Polynucleobacter asymbioticus (strain DSM 18221 / CIP 109841 / QLW-P1DMWA-1) (Polynucleobacter necessarius subsp. asymbioticus).